We begin with the raw amino-acid sequence, 825 residues long: Transcription regulator galc (825 aa).

The disordered stretch occupies residues 60–102 (RPGPYPYQSSSSSSRELSGSAAKVAIPRTTSASSQSQRRRSAR). The span at 68 to 79 (SSSSSSRELSGS) shows a compositional bias: low complexity. The segment at residues 104 to 131 (CEPCRQRKIKCDGSKPVCRQCIDHNVSC) is a DNA-binding region (zn(2)-C6 fungal-type). Positions 239-251 (DEAKSRNRKKEDS) are enriched in basic and acidic residues. 3 disordered regions span residues 239–267 (DEAK…MTPP), 642–663 (APGD…SRRI), and 804–825 (HLRD…ERHH).

The protein localises to the nucleus. Functionally, transcription factor that negatively regulates the biosynthesis of ochratoxin A (OTA), a mycotoxin composed of a chlorinated type I polyketide dihydroisocoumarin moiety linked to L-phenylalanine, and demonstrated to have nephrotoxic, immunotoxic, genotoxic, neurotoxic, and teratogenic properties. Also regulates cellular redox homeostasis and sensitivity to H(2)O(2). Carbon sources such as sucrose, glucose and arabinose repress gal4, leading to up-regulation of OTA biosynthetic genes and altered cellular redox homeostasis. The protein is Transcription regulator galc of Aspergillus niger (strain ATCC MYA-4892 / CBS 513.88 / FGSC A1513).